Here is a 505-residue protein sequence, read N- to C-terminus: MASIDFRNKINWHRRYRSPQGVKTEHEILRIFESDRGRIINSPAIRRLQQKTQVFPLERNAAVRTRLTHSMEVQQVGRYIAKEILSRLKEQNRLEEYGLDALTGPFESIVEMACLMHDIGNPPFGHFGEAAINDWFRQRLHPEDAESQPLTHDRCVVSSLRLQEGEENLNDIRRKVRQDICHFEGNAQGIRLVHTLMRMNLTWAQVGGILKYTRPAWWRGPVPDSHRYLMKKPGYYLSEEKYIARLRKELQLAPYSRFPLTWIMEAADDISYCVADLEDAVEKRIFSVEQLYHHLYHAWGHHEKDSLFELVVGNAWEKSRANTLSRSTEDQFFMYLRVNTLNKLVPYAAQRFIDNLPQIFAGTFNQALLEDASGFSRLLGLYKNVAVEHVFSHPDVEQLELQGYRVISGLLDIYQPLLSLSLNDFRELVEKERLKRFPIESRLFQKLSTRHRLAYVEVVSKLPTDSAEYPVLEYYYRCRLIQDYISGMTDLYAWDEYRRLMAVEQ.

An HD domain is found at 66–273; it reads RLTHSMEVQQ…MEAADDISYC (208 aa).

Belongs to the dGTPase family. Type 1 subfamily. In terms of assembly, homotetramer. The cofactor is Mg(2+).

It carries out the reaction dGTP + H2O = 2'-deoxyguanosine + triphosphate + H(+). Functionally, dGTPase preferentially hydrolyzes dGTP over the other canonical NTPs. This is Deoxyguanosinetriphosphate triphosphohydrolase from Salmonella enteritidis PT4 (strain P125109).